The following is a 443-amino-acid chain: Xaa-Pro dipeptidase (443 aa).

The Mn(2+) site is built by Asp-246, Asp-257, His-339, Glu-384, and Glu-423.

The protein belongs to the peptidase M24B family. Bacterial-type prolidase subfamily. Mn(2+) serves as cofactor.

It catalyses the reaction Xaa-L-Pro dipeptide + H2O = an L-alpha-amino acid + L-proline. Splits dipeptides with a prolyl residue in the C-terminal position. In Pectobacterium carotovorum subsp. carotovorum (strain PC1), this protein is Xaa-Pro dipeptidase.